A 377-amino-acid chain; its full sequence is Ribosomal RNA large subunit methyltransferase G (377 aa).

The protein belongs to the methyltransferase superfamily. RlmG family.

It is found in the cytoplasm. It carries out the reaction guanosine(1835) in 23S rRNA + S-adenosyl-L-methionine = N(2)-methylguanosine(1835) in 23S rRNA + S-adenosyl-L-homocysteine + H(+). In terms of biological role, specifically methylates the guanine in position 1835 (m2G1835) of 23S rRNA. The chain is Ribosomal RNA large subunit methyltransferase G from Shewanella oneidensis (strain ATCC 700550 / JCM 31522 / CIP 106686 / LMG 19005 / NCIMB 14063 / MR-1).